The sequence spans 333 residues: Phospholipid phosphatase-related protein type 1 (333 aa).

The next 3 membrane-spanning stretches (helical) occupy residues 12 to 32, 66 to 86, and 126 to 146; these read IIPC…LLAY, FIQP…IIFV, and FIGV…AGQV. A glycan (N-linked (GlcNAc...) asparagine) is linked at Asn-162. Transmembrane regions (helical) follow at residues 200-217, 223-243, and 256-276; these read ASLS…ITST, SRLA…LTGL, and VVAG…CVVN.

Belongs to the PA-phosphatase related phosphoesterase family.

It localises to the cell membrane. Its subcellular location is the cell projection. The protein resides in the neuron projection. Functionally, may play a role in neurite outgrowth and neurogenesis. In Danio rerio (Zebrafish), this protein is Phospholipid phosphatase-related protein type 1 (plppr1).